A 195-amino-acid chain; its full sequence is Dihydroneopterin triphosphate diphosphatase (195 aa).

The Proton acceptor role is filled by Asp-73.

This sequence belongs to the HAM1 NTPase family. Mn(2+) serves as cofactor.

The catalysed reaction is 7,8-dihydroneopterin 3'-triphosphate + H2O = 7,8-dihydroneopterin 3'-phosphate + diphosphate + H(+). The protein operates within cofactor biosynthesis; tetrahydrofolate biosynthesis. Its function is as follows. Pyrophosphatase involved in the biosynthesis of tetrahydrofolate. Catalyzes the hydrolysis of dihydroneopterin triphosphate (DHNTP) to dihydroneopterin monophosphate (DHNMP) and pyrophosphate. Shows a strict substrate specificity. Has only weak activity with GTP, ITP, XTP and dTTP, and cannot use ATP, UTP, CTP, NAD(+), NADH, diadenosine triphosphate, diadenosine tetraphosphate, ADP-ribose and UDP-glucose. This is Dihydroneopterin triphosphate diphosphatase from Limosilactobacillus reuteri (strain DSM 20016) (Lactobacillus reuteri).